Here is a 232-residue protein sequence, read N- to C-terminus: MPDTTGGHPAALKVVTLDGPAGVGKTTLARRVADALGIPYLDTGAMFRTMAWRLGPDGPDLDEALLRDRLAGFIFTLRGRGGASVLSCNGEDIGNEIRTEDVGAMASRIAALPVVRECLKAAQQRMGAAQPLVVEGRDMGTVVFPGARHKFFLDAAPEIRAMRRYTQLQTMGEAHDLALLTEQIRSRDEQDRNRAVAPLRPAADAIIVDTGDLDIDGVFGVIMQHIRSRDGL.

19–27 contacts ATP; that stretch reads GPAGVGKTT.

Belongs to the cytidylate kinase family. Type 1 subfamily.

The protein localises to the cytoplasm. It catalyses the reaction CMP + ATP = CDP + ADP. The catalysed reaction is dCMP + ATP = dCDP + ADP. The chain is Cytidylate kinase from Nitratidesulfovibrio vulgaris (strain DP4) (Desulfovibrio vulgaris).